The chain runs to 424 residues: Serine--tRNA ligase (424 aa).

231 to 233 (TAE) serves as a coordination point for L-serine. 262-264 (RAE) is an ATP binding site. E285 lines the L-serine pocket. 349–352 (EISS) contacts ATP. Residue S385 participates in L-serine binding.

This sequence belongs to the class-II aminoacyl-tRNA synthetase family. Type-1 seryl-tRNA synthetase subfamily. As to quaternary structure, homodimer. The tRNA molecule binds across the dimer.

The protein localises to the cytoplasm. It catalyses the reaction tRNA(Ser) + L-serine + ATP = L-seryl-tRNA(Ser) + AMP + diphosphate + H(+). It carries out the reaction tRNA(Sec) + L-serine + ATP = L-seryl-tRNA(Sec) + AMP + diphosphate + H(+). The protein operates within aminoacyl-tRNA biosynthesis; selenocysteinyl-tRNA(Sec) biosynthesis; L-seryl-tRNA(Sec) from L-serine and tRNA(Sec): step 1/1. In terms of biological role, catalyzes the attachment of serine to tRNA(Ser). Is also able to aminoacylate tRNA(Sec) with serine, to form the misacylated tRNA L-seryl-tRNA(Sec), which will be further converted into selenocysteinyl-tRNA(Sec). This Geobacillus sp. (strain WCH70) protein is Serine--tRNA ligase.